We begin with the raw amino-acid sequence, 281 residues long: Nucleotide-binding protein Noc_2797 (281 aa).

Residue 8 to 15 (GVSGSGKS) coordinates ATP. 58-61 (DARN) provides a ligand contact to GTP.

This sequence belongs to the RapZ-like family.

Displays ATPase and GTPase activities. The polypeptide is Nucleotide-binding protein Noc_2797 (Nitrosococcus oceani (strain ATCC 19707 / BCRC 17464 / JCM 30415 / NCIMB 11848 / C-107)).